The following is a 1047-amino-acid chain: MEPETPEKVDSAQEKVRGKTPTADDSDDSREKTGIEEKGELTDAYQLQVAEEMAKEIKKKIRKKLKEQLTYFPPDTLLHDDKLASEKRKKKKKKVPVPTKPESSPSDVCDSAVEGEQKKEGTPEDSQHMEGICSREQDVDATVPENAKPKPKKTKKKTKAVSNDNEDTNGDGVHEITSRDSPVHPKCLLDDDLVMGVYIHRTDRLKSDFMISHPMVKIHVVDEHTGQYVKKDDSERPVSSYYEKDNVDYILPIMTQPYDFKKLKSRLPEWEEQVIFNENFPYLLREFEECPKVILFFEILDFLSMDEIKNNSEVQNQECGFRKIAWAFLKLLGANGNANINSKLRLQLYYPPTKPRSQLNVVEVFEWWSKCPRNRYPSTLYVTVRGLKVPDCIKPSYRSMMALQEERGTPVYCERHRETSSVDTEPGLEDSKEEVKWKRLPGQACRIPNKHLFSLNAGERGCFCLDFSHNGRILAAACASRDGYPIILYEIPSGRFMRELCGHLNIIYDLDWSKDDRYLVTSSSDGTARVWKNEINSTSTFRVLPHPSFVYTAKFHPATRELVVTGCYDSMIRIWKIDAREDAAILVRQLDVHKSFVNSICFDDEGHHMYSGDCIGVIVVWDTYVKVNDVQTSVRHWTINKEIKETEFRGVPISYLEVHPNGKRLLIHTKDSTLRIMDLRILAARKFVGAANYREKIHSTLTPCGTLLFSGSEDGIVYVWNPETGEQVAMYSDLPFKSTIRDISYHPLENMVAFCAFGQSEPILLYIYDFQVAQQEAEMLKRYSGTLPLPGIHQSEDALCTCPKLPQQGSFQIDEFVNTENSSSRKIQLVKQRLETVTEVIRSCAAKVNKNLSMTSPPPGPAKKPRVKQSFVLTTDEIIHQFGLPQTAFISIERGPFVRHVDPPPMVVALYDYTASRSDELTIHRGDIIRVYFKDNEDWWYGSVRKGQEGFFPANHVASETLYRDSPPKVKERSPPLTPKEKTKPEKPLASQKQSLSKGRPLDPRLGPQPVGHSEKGKDQNVEDRGHKVDMETKKSEPVVRKVTLIE.

Basic and acidic residues-rich tracts occupy residues 1-17, 29-40, and 77-86; these read MEPE…EKVR, SREKTGIEEKGE, and LLHDDKLASE. Disordered stretches follow at residues 1-40 and 67-181; these read MEPE…EKGE and EQLT…SRDS. An interaction with HAP1 region spans residues 1–284; that stretch reads MEPETPEKVD…IFNENFPYLL (284 aa). The segment covering 96–106 has biased composition (low complexity); that stretch reads PVPTKPESSPS. Over residues 115–138 the composition is skewed to basic and acidic residues; that stretch reads GEQKKEGTPEDSQHMEGICSREQD. Positions 149 to 159 are enriched in basic residues; that stretch reads PKPKKTKKKTK. The span at 172-181 shows a compositional bias: basic and acidic residues; that stretch reads GVHEITSRDS. WD repeat units lie at residues 457–499, 502–541, 545–585, 592–631, 648–687, 691–730, and 735–776; these read AGER…FMRE, GHLN…TSTF, PHPS…DAAI, VHKS…NDVQ, FRGV…ARKF, ANYR…QVAM, and PFKS…AQQE. Serine 853 is subject to Phosphoserine. The 61-residue stretch at 902–962 folds into the SH3 domain; it reads DPPPMVVALY…PANHVASETL (61 aa). Basic and acidic residues-rich tracts occupy residues 963 to 987 and 1013 to 1040; these read YRDS…KPEK and HSEK…EPVV. Residues 963–1047 form a disordered region; the sequence is YRDSPPKVKE…PVVRKVTLIE (85 aa). Position 974 is a phosphoserine (serine 974).

As to quaternary structure, self-associates. Part of the tectonic-like complex (also named B9 complex). Interacts with MKS1. Interacts with NPHP1; probably as heterodimers and/or AHI1(2):NPHP1(2) heterotetramers. Interacts (via SH3 domain) with the dynamin GTPase DNM2. Interacts with HAP1; probably as AHI1(2):HAP1(2) heterotetramers. Interacts with RAB8A. Interacts with CEND1. Interacts with SPATA7. In terms of tissue distribution, expressed in the retina (at protein level). Highly expressed in the brain. Highly expressed in the testis. Expressed in the kidney, thymus, heart, lung, spleen. Weakly expressed in the liver, stomach, pancreas, and embryo. Strongly expressed during periods of both cortical and cerebellar development.

The protein resides in the cytoplasm. The protein localises to the cytoskeleton. It localises to the cilium basal body. Its subcellular location is the microtubule organizing center. It is found in the centrosome. The protein resides in the centriole. The protein localises to the cell junction. It localises to the adherens junction. Its function is as follows. Involved in vesicle trafficking and required for ciliogenesis, formation of primary non-motile cilium, and recruitment of RAB8A to the basal body of primary cilium. Component of the tectonic-like complex, a complex localized at the transition zone of primary cilia and acting as a barrier that prevents diffusion of transmembrane proteins between the cilia and plasma membranes. Involved in neuronal differentiation. As a positive modulator of classical Wnt signaling, may play a crucial role in ciliary signaling during cerebellum embryonic development. This Mus musculus (Mouse) protein is Jouberin (Ahi1).